A 126-amino-acid chain; its full sequence is Acidic phospholipase A2 4 (126 aa).

S1 is a signal peptide. Residues 2–7 constitute a propeptide that is removed on maturation; the sequence is NRPMPL. Intrachain disulfides connect C18/C78, C33/C125, C35/C51, C50/C106, C57/C99, C67/C92, and C85/C97. Residues Y34, G36, and G38 each coordinate Ca(2+). Residue H54 is part of the active site. D55 provides a ligand contact to Ca(2+). The active site involves D100.

Belongs to the phospholipase A2 family. Group I subfamily. D49 sub-subfamily. As to quaternary structure, monomer. It depends on Ca(2+) as a cofactor. Expressed by the venom gland.

The protein localises to the secreted. The enzyme catalyses a 1,2-diacyl-sn-glycero-3-phosphocholine + H2O = a 1-acyl-sn-glycero-3-phosphocholine + a fatty acid + H(+). Functionally, snake venom phospholipase A2 (PLA2) that exhibits strong anticoagulant activity, which is not due to the catalytic activity. PLA2 catalyzes the calcium-dependent hydrolysis of the 2-acyl groups in 3-sn-phosphoglycerides. The chain is Acidic phospholipase A2 4 from Naja sagittifera (Andaman cobra).